The chain runs to 166 residues: Interferon gamma (166 aa).

An N-terminal signal peptide occupies residues 1 to 23; that stretch reads MNYTSFILAFQLCAILGSSTYYC. Position 24 is a pyrrolidone carboxylic acid (glutamine 24). N-linked (GlcNAc...) asparagine glycans are attached at residues asparagine 39 and asparagine 106. The tract at residues 147 to 166 is disordered; it reads ANLRKRKRSQNPFRGRRALQ. Residues 148–166 are compositionally biased toward basic residues; sequence NLRKRKRSQNPFRGRRALQ.

It belongs to the type II (or gamma) interferon family. As to quaternary structure, homodimer. Interacts with IFNGR1 (via extracellular domain); this interaction promotes IFNGR1 dimerization. Released primarily from activated T lymphocytes.

The protein resides in the secreted. Its function is as follows. Type II interferon produced by immune cells such as T-cells and NK cells that plays crucial roles in antimicrobial, antiviral, and antitumor responses by activating effector immune cells and enhancing antigen presentation. Primarily signals through the JAK-STAT pathway after interaction with its receptor IFNGR1 to affect gene regulation. Upon IFNG binding, IFNGR1 intracellular domain opens out to allow association of downstream signaling components JAK2, JAK1 and STAT1, leading to STAT1 activation, nuclear translocation and transcription of IFNG-regulated genes. Many of the induced genes are transcription factors such as IRF1 that are able to further drive regulation of a next wave of transcription. Plays a role in class I antigen presentation pathway by inducing a replacement of catalytic proteasome subunits with immunoproteasome subunits. In turn, increases the quantity, quality, and repertoire of peptides for class I MHC loading. Increases the efficiency of peptide generation also by inducing the expression of activator PA28 that associates with the proteasome and alters its proteolytic cleavage preference. Up-regulates as well MHC II complexes on the cell surface by promoting expression of several key molecules such as cathepsins B/CTSB, H/CTSH, and L/CTSL. Participates in the regulation of hematopoietic stem cells during development and under homeostatic conditions by affecting their development, quiescence, and differentiation. The protein is Interferon gamma (IFNG) of Equus asinus (Donkey).